The following is a 284-amino-acid chain: Undecaprenyl-diphosphatase (284 aa).

Helical transmembrane passes span 7 to 27 (IILG…TGHL), 44 to 64 (EMFD…LYFH), 90 to 110 (LWLK…PLND), 116 to 136 (FYHF…FIVI), 167 to 187 (VLSL…ALLI), 197 to 217 (FTFF…ILHF), 229 to 249 (FGVL…AIKF), and 259 to 279 (FTFF…YAAF).

The protein belongs to the UppP family.

It localises to the cell membrane. The enzyme catalyses di-trans,octa-cis-undecaprenyl diphosphate + H2O = di-trans,octa-cis-undecaprenyl phosphate + phosphate + H(+). Functionally, catalyzes the dephosphorylation of undecaprenyl diphosphate (UPP). Confers resistance to bacitracin. This is Undecaprenyl-diphosphatase from Lactococcus lactis subsp. cremoris (strain SK11).